We begin with the raw amino-acid sequence, 504 residues long: MSFSVDVLANIAIELQRGIGHQDRFQRLITTLRQVLECDASALLRYDSRQFIPLAIDGLAKDVLGRRFALEGHPRLEAIARAGDVVRFPADSELPDPYDGLIPGQESLKVHACVGLPLFAGQNLIGALTLDGMQPDQFDVFSDEELRLIAALAAGALSNALLIEQLESQNMLPGDAAPFEAVKQTQMIGLSPGMTQLKKEIEIVAASDLNVLISGETGTGKELVAKAIHEASPRAVNPLVYLNCAALPESVAESELFGHVKGAFTGAISNRSGKFEMADNGTLFLDEIGELSLALQAKLLRVLQYGDIQRVGDDRSLRVDVRVLAATNRDLREEVLAGRFRADLFHRLSVFPLSVPPLRERGDDVILLAGYFCEQCRLRLGLSRVVLSAGARNLLQHYNFPGNVRELEHAIHRAVVLARATRSGDEVILEAQHFAFPEVTLPPPEAAAVPVVKQNLREATEAFQRETIRQALAQNHHNWAACARMLETDVANLHRLAKRLGLKD.

Aspartate 57 is modified (4-aspartylphosphate). Residues methionine 187 to valine 416 enclose the Sigma-54 factor interaction domain. ATP-binding positions include glycine 215–glutamate 222 and alanine 278–glutamate 287. A DNA-binding region (H-T-H motif) is located at residues tryptophan 479–lysine 498.

It participates in nitrogen metabolism; nitric oxide reduction. Its function is as follows. Required for the expression of anaerobic nitric oxide (NO) reductase, acts as a transcriptional activator for at least the norVW operon. Activation also requires sigma-54. In Escherichia coli O6:K15:H31 (strain 536 / UPEC), this protein is Anaerobic nitric oxide reductase transcription regulator NorR.